The sequence spans 302 residues: Glycine--tRNA ligase alpha subunit (302 aa).

The protein belongs to the class-II aminoacyl-tRNA synthetase family. In terms of assembly, tetramer of two alpha and two beta subunits.

The protein resides in the cytoplasm. The enzyme catalyses tRNA(Gly) + glycine + ATP = glycyl-tRNA(Gly) + AMP + diphosphate. The sequence is that of Glycine--tRNA ligase alpha subunit from Baumannia cicadellinicola subsp. Homalodisca coagulata.